Consider the following 64-residue polypeptide: Large ribosomal subunit protein uL29 (64 aa).

This sequence belongs to the universal ribosomal protein uL29 family.

This chain is Large ribosomal subunit protein uL29, found in Levilactobacillus brevis (strain ATCC 367 / BCRC 12310 / CIP 105137 / JCM 1170 / LMG 11437 / NCIMB 947 / NCTC 947) (Lactobacillus brevis).